We begin with the raw amino-acid sequence, 224 residues long: Glutathione peroxidase 3 (224 aa).

The N-terminal stretch at 1-18 (MAPGSVLSLAVALATIIG) is a signal peptide. The N-linked (GlcNAc...) asparagine glycan is linked to asparagine 38. Cysteine 73 is an active-site residue.

This sequence belongs to the glutathione peroxidase family.

The protein resides in the secreted. It is found in the extracellular space. The catalysed reaction is 2 glutathione + H2O2 = glutathione disulfide + 2 H2O. This chain is Glutathione peroxidase 3 (gpx-3), found in Caenorhabditis elegans.